We begin with the raw amino-acid sequence, 163 residues long: MANTNLESTNKSTTPSTDMELKKVFDKFDANGDGKISVSELGNVFKSMGTSYTEEELNRVLDEIDIDCDGFINQEEFATICRSSSSAVEIREAFDLYDQNKNGLISSSEIHKVLNRLGMTCSVEDCVRMIGHVDTDGDGNVNFEEFQKMMSSPELVKGTVANS.

The residue at position 2 (Ala2) is an N-acetylalanine. 4 consecutive EF-hand domains span residues 16 to 51 (STDM…MGTS), 52 to 82 (YTEE…TICR), 85 to 120 (SSAV…LGMT), and 121 to 156 (CSVE…PELV). Residues Asp29, Asn31, Asp33, Lys35, Glu40, Asp65, Asp67, Asp69, Glu76, Asp98, Asn100, Asn102, Glu109, Asp134, Asp136, Asp138, Asn140, and Glu145 each contribute to the Ca(2+) site.

In terms of biological role, potential calcium sensor. The sequence is that of Probable calcium-binding protein CML26 (CML26) from Arabidopsis thaliana (Mouse-ear cress).